Reading from the N-terminus, the 660-residue chain is Epithelial sodium channel subunit gamma (660 aa).

The Cytoplasmic segment spans residues 1–55 (MSKSGKKLTQKLKKNLPVTGPQAPTLYELMQWYCLNTNTHGCRRIVVSKGRLRRW). The helical transmembrane segment at 56 to 76 (IWISLTLCAVAVIFWQCALLL) threads the bilayer. The Extracellular portion of the chain corresponds to 77–537 (MSYYSVSASI…VTLLSNFGGQ (461 aa)). Disulfide bonds link Cys-101-Cys-286, Cys-209-Cys-217, Cys-263-Cys-270, Cys-375-Cys-460, Cys-397-Cys-456, Cys-401-Cys-452, Cys-410-Cys-437, and Cys-412-Cys-426. The helical transmembrane segment at 538–558 (LGLWMSCSMICVLEIIEVFFI) threads the bilayer. Topologically, residues 559-660 (DSFWVVLRQR…IDSDEDVERL (102 aa)) are cytoplasmic.

This sequence belongs to the amiloride-sensitive sodium channel (TC 1.A.6) family. SCNN1G subfamily. Component of the heterotrimeric epithelial sodium channel (ENaC) composed of an alpha/SCNN1A, a beta/SCNN1B and a gamma/SCNN1G subunit.

The protein localises to the apical cell membrane. The catalysed reaction is Na(+)(in) = Na(+)(out). Its activity is regulated as follows. Originally identified and characterized by its inhibition by the diuretic drug amiloride. Its function is as follows. This is one of the three pore-forming subunits of the heterotrimeric epithelial sodium channel (ENaC), a critical regulator of sodium balance and fluid homeostasis. ENaC operates in epithelial tissues, where it mediates the electrodiffusion of sodium ions from extracellular fluid through the apical membrane of cells, with water following osmotically. The chain is Epithelial sodium channel subunit gamma (scnn1g-a) from Xenopus laevis (African clawed frog).